The following is a 267-amino-acid chain: Thiamine thiazole synthase (267 aa).

NAD(+) contacts are provided by residues serine 41, 60 to 61, glycine 68, valine 132, and 160 to 162; these read ER and HVD. Fe cation-binding residues include aspartate 162 and histidine 177. An NAD(+)-binding site is contributed by methionine 227. Arginine 237 contacts glycine.

This sequence belongs to the THI4 family. Homooctamer; tetramer of dimers. It depends on Fe(2+) as a cofactor.

It carries out the reaction hydrogen sulfide + glycine + NAD(+) = ADP-5-ethyl-4-methylthiazole-2-carboxylate + nicotinamide + 3 H2O + H(+). It functions in the pathway cofactor biosynthesis; thiamine diphosphate biosynthesis. Involved in the biosynthesis of the thiazole moiety of thiamine. Catalyzes the conversion of NAD and glycine to adenosine diphosphate 5-(2-hydroxyethyl)-4-methylthiazole-2-carboxylate (ADT), an adenylated thiazole intermediate, using free sulfide as a source of sulfur. This chain is Thiamine thiazole synthase, found in Saccharolobus islandicus (strain M.14.25 / Kamchatka #1) (Sulfolobus islandicus).